The following is a 334-amino-acid chain: Ornithine carbamoyltransferase (334 aa).

Carbamoyl phosphate-binding positions include 56 to 59, glutamine 83, arginine 107, and 134 to 137; these read STRT and HPTQ. L-ornithine-binding positions include asparagine 168, aspartate 232, and 236–237; that span reads SM. Carbamoyl phosphate contacts are provided by residues 274 to 275 and arginine 320; that span reads CL.

This sequence belongs to the aspartate/ornithine carbamoyltransferase superfamily. OTCase family.

It localises to the cytoplasm. The enzyme catalyses carbamoyl phosphate + L-ornithine = L-citrulline + phosphate + H(+). The protein operates within amino-acid biosynthesis; L-arginine biosynthesis; L-arginine from L-ornithine and carbamoyl phosphate: step 1/3. Its function is as follows. Reversibly catalyzes the transfer of the carbamoyl group from carbamoyl phosphate (CP) to the N(epsilon) atom of ornithine (ORN) to produce L-citrulline. This is Ornithine carbamoyltransferase from Escherichia coli (strain 55989 / EAEC).